The chain runs to 186 residues: Pyridoxal 5'-phosphate synthase subunit PdxT (186 aa).

Residue 47 to 49 (GES) coordinates L-glutamine. Residue C79 is the Nucleophile of the active site. L-glutamine contacts are provided by residues R106 and 134 to 135 (IR). Active-site charge relay system residues include H170 and E172.

The protein belongs to the glutaminase PdxT/SNO family. As to quaternary structure, in the presence of PdxS, forms a dodecamer of heterodimers. Only shows activity in the heterodimer.

It carries out the reaction aldehydo-D-ribose 5-phosphate + D-glyceraldehyde 3-phosphate + L-glutamine = pyridoxal 5'-phosphate + L-glutamate + phosphate + 3 H2O + H(+). The catalysed reaction is L-glutamine + H2O = L-glutamate + NH4(+). It functions in the pathway cofactor biosynthesis; pyridoxal 5'-phosphate biosynthesis. Its function is as follows. Catalyzes the hydrolysis of glutamine to glutamate and ammonia as part of the biosynthesis of pyridoxal 5'-phosphate. The resulting ammonia molecule is channeled to the active site of PdxS. In Methanothrix thermoacetophila (strain DSM 6194 / JCM 14653 / NBRC 101360 / PT) (Methanosaeta thermophila), this protein is Pyridoxal 5'-phosphate synthase subunit PdxT.